Consider the following 467-residue polypeptide: AT-rich interactive domain-containing protein cfi-1 (467 aa).

A disordered region spans residues 1 to 56; the sequence is MSVRIDEPQLFVSMSKEPTQETVNVGGHHDDSSSNCDERVDDQTEEQKSPPASPDL. The segment covering 27-48 has biased composition (basic and acidic residues); it reads GHHDDSSSNCDERVDDQTEEQK. The ARID domain maps to 181 to 273; it reads DVKRKEWLDD…YLYDYECEKE (93 aa). The region spanning 356-464 is the REKLES domain; sequence AILEAHQRNL…GVLFALDETV (109 aa). The disordered stretch occupies residues 383-441; that stretch reads LTACSNGNGGNIHNSGRESTSSNDSDIPAKRPKLENDVKTNGASSMRISTKHSDNSKTS. Basic and acidic residues predominate over residues 409–420; that stretch reads IPAKRPKLENDV. Over residues 421–430 the composition is skewed to polar residues; that stretch reads KTNGASSMRI.

In terms of tissue distribution, present in IL2 and URA neurons, and in AVD and PVC interneurons. Present in muscles from head and pharynx (at protein level).

It localises to the nucleus. Transcription factor. Regulates neuronal subtype identity. Involved in motor neuron fate determination and maintenance, acting as a transcriptional repressor to counteract gene activation by transcription factor unc-3 in a subset of motor neurons. Probably acts by binding to specific promoter elements. Promotes differentiation of URA sensory neurons and prevents them from expressing male-specific CEM neuronal features. Promotes differentiation of AVD and PVC interneurons and their glutamate receptor expression. This is AT-rich interactive domain-containing protein cfi-1 (cfi-1) from Caenorhabditis elegans.